Consider the following 749-residue polypeptide: Amyloid-beta A4 precursor protein-binding family A member 2 (749 aa).

3 disordered regions span residues 1 to 94 (MAHR…PEEE), 130 to 220 (DTDE…GDLE), and 238 to 344 (SMTS…NIPE). Ser-11 carries the phosphoserine modification. Residues 70–80 (GDSSSDYVNNT) are compositionally biased toward polar residues. 2 stretches are compositionally biased toward acidic residues: residues 81–94 (SEEE…PEEE) and 131–142 (TDECQEAVEEWT). The STXBP1-binding stretch occupies residues 185 to 270 (HYCASKEGYQ…SVEACPPIKA (86 aa)). At Ser-208 the chain carries Phosphoserine. The span at 238-247 (SMTSITSASE) shows a compositional bias: polar residues. Residues 305-315 (RTPEERLKWPH) show a composition bias toward basic and acidic residues. The 188-residue stretch at 368-555 (DGIIFAANYL…IINTQEMYND (188 aa)) folds into the PID domain. PDZ domains follow at residues 568–654 (ELQL…IVSC) and 659–734 (TVLI…TMPA).

As to quaternary structure, part of a multimeric complex containing STXBP1 and syntaxin-1. Binds to the cytoplasmic domain of amyloid-beta protein, and to the nuclear factor NF-kappa-B/p65 via its PDZ domain. Interacts with the N-terminal domain of NECAB3. In terms of tissue distribution, brain.

Functionally, putative function in synaptic vesicle exocytosis by binding to STXBP1, an essential component of the synaptic vesicle exocytotic machinery. May modulate processing of the amyloid-beta precursor protein (APP) and hence formation of APP-beta. In Homo sapiens (Human), this protein is Amyloid-beta A4 precursor protein-binding family A member 2 (APBA2).